Here is a 409-residue protein sequence, read N- to C-terminus: uncharacterized protein (409 aa).

4 helical membrane-spanning segments follow: residues 20 to 40 (ILTM…VSML), 283 to 303 (FALL…IGVM), 344 to 364 (IGGI…TVIF), and 372 to 392 (IPAV…FGLL).

This sequence belongs to the ABC-4 integral membrane protein family.

Its subcellular location is the cell membrane. This is an uncharacterized protein from Bacillus subtilis (strain 168).